The primary structure comprises 31 residues: uncharacterized protein (31 aa).

This is an uncharacterized protein from Saccharomyces cerevisiae (strain ATCC 204508 / S288c) (Baker's yeast).